Here is a 310-residue protein sequence, read N- to C-terminus: tRNA dimethylallyltransferase (310 aa).

12–19 (GPTATGKT) lines the ATP pocket. 14 to 19 (TATGKT) provides a ligand contact to substrate. The interval 37-40 (DSMM) is interaction with substrate tRNA.

This sequence belongs to the IPP transferase family. Monomer. Mg(2+) is required as a cofactor.

The enzyme catalyses adenosine(37) in tRNA + dimethylallyl diphosphate = N(6)-dimethylallyladenosine(37) in tRNA + diphosphate. In terms of biological role, catalyzes the transfer of a dimethylallyl group onto the adenine at position 37 in tRNAs that read codons beginning with uridine, leading to the formation of N6-(dimethylallyl)adenosine (i(6)A). This Desulforudis audaxviator (strain MP104C) protein is tRNA dimethylallyltransferase.